Here is a 512-residue protein sequence, read N- to C-terminus: 2,3-bisphosphoglycerate-independent phosphoglycerate mutase (512 aa).

2 residues coordinate Mn(2+): Asp-11 and Ser-61. The active-site Phosphoserine intermediate is Ser-61. Substrate contacts are provided by residues His-122, 152-153 (RD), Arg-184, Arg-190, 259-262 (RADR), and Lys-332. Asp-399, His-403, Asp-440, His-441, and His-459 together coordinate Mn(2+).

This sequence belongs to the BPG-independent phosphoglycerate mutase family. In terms of assembly, monomer. The cofactor is Mn(2+).

It catalyses the reaction (2R)-2-phosphoglycerate = (2R)-3-phosphoglycerate. It functions in the pathway carbohydrate degradation; glycolysis; pyruvate from D-glyceraldehyde 3-phosphate: step 3/5. Its function is as follows. Catalyzes the interconversion of 2-phosphoglycerate and 3-phosphoglycerate. The chain is 2,3-bisphosphoglycerate-independent phosphoglycerate mutase from Francisella tularensis subsp. novicida (strain U112).